Reading from the N-terminus, the 78-residue chain is Acyl carrier protein (78 aa).

The Carrier domain maps to 2 to 77 (SSIEERVKKI…QATSYVEANL (76 aa)). Ser-37 carries the O-(pantetheine 4'-phosphoryl)serine modification.

Belongs to the acyl carrier protein (ACP) family. Post-translationally, 4'-phosphopantetheine is transferred from CoA to a specific serine of apo-ACP by AcpS. This modification is essential for activity because fatty acids are bound in thioester linkage to the sulfhydryl of the prosthetic group.

The protein resides in the cytoplasm. The protein operates within lipid metabolism; fatty acid biosynthesis. Carrier of the growing fatty acid chain in fatty acid biosynthesis. This Hydrogenovibrio crunogenus (strain DSM 25203 / XCL-2) (Thiomicrospira crunogena) protein is Acyl carrier protein.